Reading from the N-terminus, the 396-residue chain is Phosphoglycerate kinase (396 aa).

Substrate-binding positions include D21–N23, R36, H59–K62, R119, and R156. Residues K206, G294, E325, and G352–S355 contribute to the ATP site.

Belongs to the phosphoglycerate kinase family. Monomer.

It is found in the cytoplasm. It catalyses the reaction (2R)-3-phosphoglycerate + ATP = (2R)-3-phospho-glyceroyl phosphate + ADP. The protein operates within carbohydrate degradation; glycolysis; pyruvate from D-glyceraldehyde 3-phosphate: step 2/5. This Staphylococcus aureus (strain USA300) protein is Phosphoglycerate kinase.